The primary structure comprises 271 residues: Formamidopyrimidine-DNA glycosylase (271 aa).

The Schiff-base intermediate with DNA role is filled by Pro2. Catalysis depends on Glu3, which acts as the Proton donor. Residue Lys57 is the Proton donor; for beta-elimination activity of the active site. Positions 90, 109, and 151 each coordinate DNA. The FPG-type zinc finger occupies 236–270 (HVYGRGGETCTQCGHLLSEIKLGQRATVFCSLCQK). The Proton donor; for delta-elimination activity role is filled by Arg260.

This sequence belongs to the FPG family. In terms of assembly, monomer. It depends on Zn(2+) as a cofactor.

The enzyme catalyses Hydrolysis of DNA containing ring-opened 7-methylguanine residues, releasing 2,6-diamino-4-hydroxy-5-(N-methyl)formamidopyrimidine.. It carries out the reaction 2'-deoxyribonucleotide-(2'-deoxyribose 5'-phosphate)-2'-deoxyribonucleotide-DNA = a 3'-end 2'-deoxyribonucleotide-(2,3-dehydro-2,3-deoxyribose 5'-phosphate)-DNA + a 5'-end 5'-phospho-2'-deoxyribonucleoside-DNA + H(+). Functionally, involved in base excision repair of DNA damaged by oxidation or by mutagenic agents. Acts as a DNA glycosylase that recognizes and removes damaged bases. Has a preference for oxidized purines, such as 7,8-dihydro-8-oxoguanine (8-oxoG). Has AP (apurinic/apyrimidinic) lyase activity and introduces nicks in the DNA strand. Cleaves the DNA backbone by beta-delta elimination to generate a single-strand break at the site of the removed base with both 3'- and 5'-phosphates. This is Formamidopyrimidine-DNA glycosylase from Shewanella halifaxensis (strain HAW-EB4).